The chain runs to 1079 residues: Lon protease homolog, mitochondrial (1079 aa).

Residues 1-60 constitute a mitochondrion transit peptide; the sequence is MLRPRTYVRKLAWRCPRKSQLGLRLATSVSSHKSLPLPMNFDISHSQSAFRAYQDIIHRN. A compositionally biased stretch (basic and acidic residues) spans 61–116; sequence KSVGDDEPSQRSENENNPSESDKDSNQDPETPKKDKESENDKEPEKEKDIENDNKV. Disordered stretches follow at residues 61-158 and 262-285; these read KSVG…VDPV and LTTP…ESFP. The segment covering 117–131 has biased composition (polar residues); that stretch reads SSESNENVTLASSNT. Low complexity predominate over residues 132-143; it reads GGAAPPNGNNNG. Positions 165 to 391 constitute a Lon N-terminal domain; that stretch reads LLAIPMKDRP…RALELLKVEL (227 aa). The span at 262–281 shows a compositional bias: basic and acidic residues; that stretch reads LTTPSSEKEAKSEEPSKEDA. 543–550 serves as a coordination point for ATP; the sequence is GPPGTGKT. Over residues 756 to 765 the composition is skewed to basic and acidic residues; it reads ALDSSKEKEG. The tract at residues 756 to 832 is disordered; the sequence is ALDSSKEKEG…SEEDQQPEPK (77 aa). Over residues 768 to 779 the composition is skewed to low complexity; that stretch reads ASSEEANVNSES. Residues 780–802 show a composition bias toward polar residues; that stretch reads TKSNTSQAEPVAESSTDISTKSK. Positions 803–818 are enriched in basic and acidic residues; that stretch reads VASEKIETKEKKETNK. The Lon proteolytic domain occupies 865 to 1053; sequence FPPPGVATGL…QEVFDKIFPN (189 aa). Residues serine 959 and lysine 1002 contribute to the active site.

It belongs to the peptidase S16 family. Homohexamer or homoheptamer. Organized in a ring with a central cavity.

The protein localises to the mitochondrion matrix. The catalysed reaction is Hydrolysis of proteins in presence of ATP.. ATP-dependent serine protease that mediates the selective degradation of misfolded, unassembled or oxidatively damaged polypeptides as well as certain short-lived regulatory proteins in the mitochondrial matrix. May also have a chaperone function in the assembly of inner membrane protein complexes. Participates in the regulation of mitochondrial gene expression and in the maintenance of the integrity of the mitochondrial genome. Binds to mitochondrial DNA in a site-specific manner. This chain is Lon protease homolog, mitochondrial, found in Debaryomyces hansenii (strain ATCC 36239 / CBS 767 / BCRC 21394 / JCM 1990 / NBRC 0083 / IGC 2968) (Yeast).